The primary structure comprises 165 residues: MASYFDEHDCEPLNPEREARNNMLLELARRVRGAWSWAPGGRSLFNRMDFEDLGLVDWEHHLPPPAAKAVVESLPRTVISSAKADLKCPVCLLEFEAEETVIEMPCHHLFHSNCILPWLSKTNSCPLCRHELPTDDDSYEEHKKDKARRQQQQHRLENLHGAMYT.

An RING-type; atypical zinc finger spans residues 88-129; the sequence is CPVCLLEFEAEETVIEMPCHHLFHSNCILPWLSKTNSCPLCR. Positions 136–165 are disordered; sequence DDSYEEHKKDKARRQQQQHRLENLHGAMYT. At threonine 165 the chain carries Phosphothreonine.

Belongs to the RNF181 family. In terms of assembly, directly interacts with ITGA2B and, as a result, with integrin ITGA2B/ITGB3. There is no evidence that integrin ITGA2B/ITGB3 is an endogenous substrate for RNF181-directed ubiquitination. In terms of processing, auto-ubiquitinated as part of the enzymatic reaction.

It catalyses the reaction S-ubiquitinyl-[E2 ubiquitin-conjugating enzyme]-L-cysteine + [acceptor protein]-L-lysine = [E2 ubiquitin-conjugating enzyme]-L-cysteine + N(6)-ubiquitinyl-[acceptor protein]-L-lysine.. It functions in the pathway protein modification; protein ubiquitination. Its function is as follows. E3 ubiquitin-protein ligase which accepts ubiquitin from an E2 ubiquitin-conjugating enzyme in the form of a thioester and then directly transfers the ubiquitin to targeted substrates. Catalyzes monoubiquitination of 26S proteasome subunit PSMC2/RPT1. This is E3 ubiquitin-protein ligase RNF181 from Mus musculus (Mouse).